Reading from the N-terminus, the 298-residue chain is Acetyl-coenzyme A carboxylase carboxyl transferase subunit beta (298 aa).

In terms of domain architecture, CoA carboxyltransferase N-terminal spans 26 to 295 (LWIKCPETGE…DNANAVVPLA (270 aa)).

Belongs to the AccD/PCCB family. In terms of assembly, acetyl-CoA carboxylase is a heterohexamer composed of biotin carboxyl carrier protein (AccB), biotin carboxylase (AccC) and two subunits each of ACCase subunit alpha (AccA) and ACCase subunit beta (AccD).

It is found in the cytoplasm. The catalysed reaction is N(6)-carboxybiotinyl-L-lysyl-[protein] + acetyl-CoA = N(6)-biotinyl-L-lysyl-[protein] + malonyl-CoA. It functions in the pathway lipid metabolism; malonyl-CoA biosynthesis; malonyl-CoA from acetyl-CoA: step 1/1. Its function is as follows. Component of the acetyl coenzyme A carboxylase (ACC) complex. Biotin carboxylase (BC) catalyzes the carboxylation of biotin on its carrier protein (BCCP) and then the CO(2) group is transferred by the transcarboxylase to acetyl-CoA to form malonyl-CoA. The protein is Acetyl-coenzyme A carboxylase carboxyl transferase subunit beta of Agrobacterium fabrum (strain C58 / ATCC 33970) (Agrobacterium tumefaciens (strain C58)).